We begin with the raw amino-acid sequence, 1849 residues long: MSKNIQRQRSISSISSRGVDRDRDPASGGLGLLSPYNSRSPLAGLHHSPGSLDATANQLSRPTFLLERKATEDIAKLDGVLFDDIPTLGSSNDHISSLGAGSPYPTINTSLAVTNPNYLSASSPGGPRRRANTASGPLSPAPPASPIDRLSKTTNRGSFVPSTARQPMNSQPPAPASSAPPPKQRTTSPSVASPPSQTRSQTVPYLSSNFGPTANMYGQRQPSGVDPSRPFHQVPLPPPPMSPPPAIGTINSIMTNIPPPPPRYPSAPAAAIHLPGPPGAPPPSGLPPPPGPPPNNTTNWQGTWIGAYGSYIPPPPPQQTHRPYNPQPYKTVNGQTIAIPPPPPPTESMQMSATYIPQGDSYGEGVGIPGLGMDDMAAWSATSQSSWLGGYNSIGSLAPTNASDTAASTPVDAYGSHNRDNSTTSNATSSGASGIPPELAAQWPLDRVLDWLQANNFSNDWRSTFRALDLHGNRFLEVGSANGGRGNFGMMHQLVYPRLAAECISSGTGWDQPREREEGKRMRRLIRHIVKGETPGTGMSSHTRKESISNTSLVPTSAGPDSGSPDTPIKAPGPGFSVGHPGGNHRKLLVGNFDDEGAHRRSPVASEPSEVGITFTERSSSNRGYSPAGSPAPTPGLFSSSTAPNLASSPGGRFGGHRNRNSTDSVSSNAAIYGSGVPPDASQVLRSQMNFGDMAKDTRRYGHDGGNRPSPLGDNASNGDRSAGASEPPGSAKEGKSFLSIFNHRKKKHHDDPDSPTSPMQHKSHSLGSRGNASETSLERPGSSVSTSHEHNTPASSMRSRRITTGRIFILATLDYWNYRMVDVSDVESASDLRQLICINLGLPDADGAQVYLTELGKFDHEDPLDDSQLVANKKVRADAAGSLKVFVRPGNMAGLAVNIGQSQNALSPAHLPAGAKMDEDTYARLNGQRRRSSSSPPASRQNTLTGGEHGKPTSTGADDDENKDPKSDDIAQQAEAHRIEMERKQQAYLAKRKHARENGNSPSENGTGSYTGIVGPKVIDFDEPRNSPFEDKKPFDSAFAPQRRAPAAPLDPSATLIKANSLSKRGSHQRNSQGSVDGFPSKRQGTGMTESPKHISEKRKPTNERQALGGIGAALAGMGRGLGGIAHPGGAGQRGTSPNRSSPGSAGESAGVASSTTDRGEDAKSRKPISSGNVSPTSSARTVSDEPPQLPKVVIKPRIFDGDSSSDEDSDDDSDDGLFAKPLAGRGGDDAAAKGKEPATKPVAKSPMSKHGTFWNDADSDGDEDPISESASNLNKRPSLTVNTKRGRKGLSVTFTSPDLPSSAGSKTAAGDEDDRSSRGSKRTPNTPHSEGWDSNNDKDVKLSRRKSFMEKDTSIWANRPPTDALINNLEDFFPNLDVDQPVLEEGELPGDLPPSPIAEAEEPHDQQQAKSMTTSRISNLYNDSDTLGSDESTLKALERPASIVSVARKNTRRSGGLGRMKSIREVAHKRYTQGAGAPPPVPAAPNNSNNSSSSGSKNSNLMRRKSTKMFNANIVQIRPERGSMILPQIPQDHLPSLPHNANNQIPKRQTTFRWFKGQLIGKGTYGRVYLGMNATTGEFLAVKEVEVNPKAAGGDKNKMKELVAALDQEIDTMQHLDHVNIVQYLGCERKETSISIFLEYIPGGSIGSCLRKHGKFEESVVSSLTRQTLSGLAYLHREGILHRDLKADNILLDVDGTAKISDFGISKKTDNIYGNDKTNSMQGSVFWMAPEVIRSQGEGYSAKVDIWSLGCVVLEMFAGRRPWSKDEAVGAIYKIANGETPPIPEEVSAAVTPVALSFMWDCFSVNPEERPTATKLLAEHPFCVFRDDYDFDQTELYAKIKGTWNTK.

The Protein kinase domain occupies 1556–1825 (WFKGQLIGKG…TKLLAEHPFC (270 aa)). Residues 1562-1570 (IGKGTYGRV) and K1585 each bind ATP. D1686 serves as the catalytic Proton acceptor.

This sequence belongs to the protein kinase superfamily. STE Ser/Thr protein kinase family. MAP kinase kinase kinase subfamily.

It carries out the reaction L-seryl-[protein] + ATP = O-phospho-L-seryl-[protein] + ADP + H(+). The catalysed reaction is L-threonyl-[protein] + ATP = O-phospho-L-threonyl-[protein] + ADP + H(+). In terms of biological role, mitogen-activated protein kinase kinase kinase, part of the mkh1-mkk1-spm1 MAPK cascade that regulates vegetative growth, conidial formation, colony surface hydrophobicity, osmotic stress, cell wall integrity maintenance, carbon and nitrogen source utilization, chitin distribution, septa formation, and pathogenicity. This Cytospora mali (Apple Valsa canker fungus) protein is Mitogen-activated protein kinase kinase kinase mkh1.